A 374-amino-acid polypeptide reads, in one-letter code: Multicilin (374 aa).

Positions 164–212 (EQYWRDVADHNQKALGDALVENNQLQVSLTEKQEEIVSLKEKNIQLNEL) form a coiled coil. The disordered stretch occupies residues 230–260 (RTKQNSGATQGRLPVKRSLEDFYPQSNEPDS). Positions 330–374 (TDLEDVSFRTSIKEHSTIRTLAFPQGNAFTIRTSGGGYKFRWVPN) are TIRT domain.

Belongs to the geminin family. As to quaternary structure, component of the EDM complex, at least composed of e2f4, e2f5, mcidas and tfdp1. In terms of tissue distribution, expressed in multiciliate differentiating cells. Expression is lost by stage 26, when multiciliate cells in the skin are fully differentiated, but is then detected in the developing nephrostomes of the kidneys where multiciliate cells form at later stages.

It localises to the nucleus. Its function is as follows. Transcription regulator specifically required for multiciliate cell differentiation. Acts in a multiprotein complex containing E2F4 and E2F5 that binds and activates genes required for centriole biogenesis. Activates genes required for centriole assembly (plk4, cep152) and genes specifically required for motile cilia formation (foxj1). Also promotes the deuterosome pathway of centriole biogenesis by activating expression of ccdc67/deup1, but not its paralog cep63. The sequence is that of Multicilin (mcidas) from Xenopus laevis (African clawed frog).